Reading from the N-terminus, the 288-residue chain is Transmembrane protein 163 (288 aa).

The disordered stretch occupies residues 1 to 64 (MEPALGSERR…ESGQFSDGLE (64 aa)). Topologically, residues 1–87 (MEPALGSERR…HEAQNYRKKA (87 aa)) are cytoplasmic. Ser11 bears the Phosphoserine mark. Positions 12–24 (PPGPGVPRPPPRG) are enriched in pro residues. The span at 25 to 42 (HAPSTAAPAPSPAPMSSS) shows a compositional bias: low complexity. The segment at 41–71 (SSVQSDEERQPRISESGQFSDGLEDRGLLES) is required for interaction with MCOLN1. Ser45, Ser54, Ser56, and Ser60 each carry phosphoserine. The helical transmembrane segment at 88-108 (LWVSWLSIIVTLALAVAAFTV) threads the bilayer. Over 109–115 (SVMRYSA) the chain is Extracellular. Residues 116–136 (SAFGFAFDAILDVLSSAIVLW) traverse the membrane as a helical segment. The Cytoplasmic portion of the chain corresponds to 137–149 (RYSNAAAVHSANR). The chain crosses the membrane as a helical span at residues 150-170 (EYIACVILGVIFLLSSICIVV). Topologically, residues 171–186 (KAIHDLSTRLLPEVDD) are extracellular. A helical membrane pass occupies residues 187–207 (FLFSVSILSGILCSVLAVLKF). Topologically, residues 208–216 (MLGKVLTSR) are cytoplasmic. A helical transmembrane segment spans residues 217–237 (ALITDGFNSLVGGVMGFSILL). The Extracellular portion of the chain corresponds to 238–254 (SAEVFKHNAAVWYLDGS). A helical transmembrane segment spans residues 255 to 275 (IGVLIGLTIFAYGVKLLIDMV). Over 276–288 (PRVRQTRHYEMFE) the chain is Cytoplasmic.

Belongs to the TMEM163 family. As to quaternary structure, homodimer. Interacts with MCOLN1. Interacts with SLC30A1, SLC30A2, SLC30A3 and SLC30A4. Widely expressed, with high expression in the brain, cerebellum, heart, lung and spleen. In the brain, mainly expressed in the glutaminergic neuron subpopulations.

It localises to the cytoplasmic vesicle. The protein localises to the secretory vesicle. The protein resides in the synaptic vesicle membrane. Its subcellular location is the early endosome membrane. It is found in the late endosome membrane. It localises to the lysosome membrane. The protein localises to the cell membrane. It catalyses the reaction Zn(2+)(in) = Zn(2+)(out). In terms of biological role, zinc ion transporter that mediates zinc efflux and plays a crucial role in intracellular zinc homeostasis. Binds the divalent cations Zn(2+), Ni(2+), and to a minor extent Cu(2+). Is a functional modulator of P2X purinoceptors, including P2RX1, P2RX3, P2RX4 and P2RX7. Plays a role in central nervous system development and is required for myelination, and survival and proliferation of oligodendrocytes. In Mus musculus (Mouse), this protein is Transmembrane protein 163 (Tmem163).